Here is a 140-residue protein sequence, read N- to C-terminus: Thioredoxin H9 (140 aa).

Residue glycine 2 is the site of N-myristoyl glycine attachment. Residue cysteine 4 is the site of S-palmitoyl cysteine attachment. The residue at position 14 (serine 14) is a Phosphoserine. A Thioredoxin domain is found at 25-129 (VHLITTKESW…PELQKKVTSI (105 aa)). Residues cysteine 57 and cysteine 60 each act as nucleophile in the active site. The cysteines at positions 57 and 60 are disulfide-linked. Serine 136 carries the post-translational modification Phosphoserine.

The protein belongs to the thioredoxin family. Plant H-type subfamily. In terms of tissue distribution, ubiquitous.

The protein resides in the cell membrane. In terms of biological role, probable thiol-disulfide oxidoreductase that may play a role in intercellular communication due to its ability to move from cell to cell. The sequence is that of Thioredoxin H9 (TRX9) from Arabidopsis thaliana (Mouse-ear cress).